We begin with the raw amino-acid sequence, 169 residues long: Phosphopantetheine adenylyltransferase (169 aa).

S8 contributes to the substrate binding site. ATP-binding positions include 8–9 (SF) and H16. Substrate is bound by residues K40, T72, and R86. ATP-binding positions include 87 to 89 (GLR), E97, and 122 to 128 (YSFLSSS).

This sequence belongs to the bacterial CoaD family. Homohexamer. The cofactor is Mg(2+).

The protein localises to the cytoplasm. The enzyme catalyses (R)-4'-phosphopantetheine + ATP + H(+) = 3'-dephospho-CoA + diphosphate. The protein operates within cofactor biosynthesis; coenzyme A biosynthesis; CoA from (R)-pantothenate: step 4/5. Functionally, reversibly transfers an adenylyl group from ATP to 4'-phosphopantetheine, yielding dephospho-CoA (dPCoA) and pyrophosphate. This chain is Phosphopantetheine adenylyltransferase, found in Cyanothece sp. (strain PCC 7425 / ATCC 29141).